Here is an 852-residue protein sequence, read N- to C-terminus: DNA mismatch repair protein MutS (852 aa).

602–609 (GPNMSGKS) lines the ATP pocket.

It belongs to the DNA mismatch repair MutS family.

In terms of biological role, this protein is involved in the repair of mismatches in DNA. It is possible that it carries out the mismatch recognition step. This protein has a weak ATPase activity. The chain is DNA mismatch repair protein MutS from Streptococcus thermophilus (strain CNRZ 1066).